We begin with the raw amino-acid sequence, 182 residues long: Flavin prenyltransferase UbiX (182 aa).

FMN is bound by residues 9 to 11 (GAS), Ser35, 86 to 89 (SIKT), and Arg121. Dimethylallyl phosphate-binding residues include Tyr151 and Arg167.

It belongs to the UbiX/PAD1 family.

The enzyme catalyses dimethylallyl phosphate + FMNH2 = prenylated FMNH2 + phosphate. In terms of biological role, flavin prenyltransferase that catalyzes the synthesis of the prenylated FMN cofactor (prenyl-FMN) for 4-hydroxy-3-polyprenylbenzoic acid decarboxylase UbiD. The prenyltransferase is metal-independent and links a dimethylallyl moiety from dimethylallyl monophosphate (DMAP) to the flavin N5 and C6 atoms of FMN. This Archaeoglobus fulgidus (strain ATCC 49558 / DSM 4304 / JCM 9628 / NBRC 100126 / VC-16) protein is Flavin prenyltransferase UbiX.